Here is a 524-residue protein sequence, read N- to C-terminus: Probable lipid II flippase MurJ (524 aa).

13 helical membrane passes run 44–64, 103–123, 146–166, 172–192, 195–215, 250–270, 284–304, 322–342, 367–387, 396–416, 420–440, 456–476, and 494–514; these read IFGAGMATDAFFVAFKLPNLL, LLTLALAVVTVAGMLAAPWVI, ITFPYILLISLASLVGAILNT, IPAFAPTFLNISMIGFALFAA, FNPPVLALAWAVTVGGVLQLV, ILGVSVSQISLIINTIFASFL, LMEFPSGVLGVALGTILLPSL, WGLRLCFLLALPSAVALGILA, LIAYSVGLIGLIVVKVLAPGF, PVKIAIVTLIMTQLMNLAFIG, HAGLSLSIGLAACLNASLLYW, WFLMRLIISVLVMAAVLFGVL, and LMAVVIAGIAAYFAALAVLGF.

Belongs to the MurJ/MviN family.

Its subcellular location is the cell inner membrane. The protein operates within cell wall biogenesis; peptidoglycan biosynthesis. In terms of biological role, involved in peptidoglycan biosynthesis. Transports lipid-linked peptidoglycan precursors from the inner to the outer leaflet of the cytoplasmic membrane. In Salmonella typhimurium (strain LT2 / SGSC1412 / ATCC 700720), this protein is Probable lipid II flippase MurJ.